We begin with the raw amino-acid sequence, 58 residues long: Potassium channel toxin alpha-KTx BmKcug1a (58 aa).

The signal sequence occupies residues Met-1–Ala-21. Gln-22 is subject to Pyrrolidone carboxylic acid. 3 cysteine pairs are disulfide-bonded: Cys-28-Cys-49, Cys-34-Cys-54, and Cys-38-Cys-56.

It belongs to the short scorpion toxin superfamily. Potassium channel inhibitor family. Alpha-KTx 01 subfamily. In terms of tissue distribution, expressed by the venom gland.

It is found in the secreted. Potent blocker of both large-conductance calcium-activated potassium channels (KCa1.1/KCNMA1) and voltage-gated potassium channels (Kv1.3/KCNA3 and ERG1/Kv11.1/KCNH2). In Olivierus martensii (Manchurian scorpion), this protein is Potassium channel toxin alpha-KTx BmKcug1a.